Reading from the N-terminus, the 387-residue chain is Dual-specificity RNA methyltransferase RlmN (387 aa).

The active-site Proton acceptor is glutamate 93. A Radical SAM core domain is found at 99 to 343 (EENRGTLCIS…TTVRKTRGDD (245 aa)). Cysteine 106 and cysteine 348 are disulfide-bonded. Residues cysteine 113, cysteine 117, and cysteine 120 each contribute to the [4Fe-4S] cluster site. S-adenosyl-L-methionine-binding positions include 172 to 173 (GE), serine 204, 226 to 228 (SLH), and asparagine 305. The active-site S-methylcysteine intermediate is cysteine 348.

It belongs to the radical SAM superfamily. RlmN family. Requires [4Fe-4S] cluster as cofactor.

Its subcellular location is the cytoplasm. The catalysed reaction is adenosine(2503) in 23S rRNA + 2 reduced [2Fe-2S]-[ferredoxin] + 2 S-adenosyl-L-methionine = 2-methyladenosine(2503) in 23S rRNA + 5'-deoxyadenosine + L-methionine + 2 oxidized [2Fe-2S]-[ferredoxin] + S-adenosyl-L-homocysteine. It catalyses the reaction adenosine(37) in tRNA + 2 reduced [2Fe-2S]-[ferredoxin] + 2 S-adenosyl-L-methionine = 2-methyladenosine(37) in tRNA + 5'-deoxyadenosine + L-methionine + 2 oxidized [2Fe-2S]-[ferredoxin] + S-adenosyl-L-homocysteine. Functionally, specifically methylates position 2 of adenine 2503 in 23S rRNA and position 2 of adenine 37 in tRNAs. m2A2503 modification seems to play a crucial role in the proofreading step occurring at the peptidyl transferase center and thus would serve to optimize ribosomal fidelity. In Janthinobacterium sp. (strain Marseille) (Minibacterium massiliensis), this protein is Dual-specificity RNA methyltransferase RlmN.